The primary structure comprises 366 residues: Subtilisin-like protease het-Q2 (366 aa).

One can recognise a Peptidase S8 domain in the interval 1 to 321 (MSAISHHSLS…RVLMALGEKT (321 aa)). Asp35 functions as the Charge relay system in the catalytic mechanism. The disordered stretch occupies residues 79–98 (DFCQPSPPGDRQGPPPQPHS). A compositionally biased stretch (pro residues) spans 83 to 96 (PSPPGDRQGPPPQP). Residues His105 and Ser266 each act as charge relay system in the active site. The helical transmembrane segment at 261–283 (LVSGSSFATPVVVSVAALVLAFV) threads the bilayer.

The protein belongs to the peptidase S8 family.

It is found in the membrane. Functionally, serine protease involved in heterokaryon incompatibility, a process that ensures that during spontaneous vegetative cell fusion, only compatible cells from the same colony survive (non-self-recognition). In P.anserina, the het-q locus exists as 2 incompatible alleles, het-Q1 (AC B2AXJ5) and het-Q2 (this entry). Prevents cell fusion with strains containing the gasdermin-like protein het-Q1 by mediating proteolytic cleavage and maturation of het-Q1 during the allorecognition process, thereby triggering cell death. The sequence is that of Subtilisin-like protease het-Q2 from Podospora anserina (Pleurage anserina).